Reading from the N-terminus, the 346-residue chain is Very-long-chain 3-oxoacyl-CoA reductase (346 aa).

A helical membrane pass occupies residues 26-46 (SAYFLLAAGSLFVASRALTFV). The NADP(+) site is built by valine 71, aspartate 126, aspartate 134, asparagine 153, tyrosine 220, lysine 224, isoleucine 253, and serine 255. The active-site Proton donor is the tyrosine 220. Lysine 224 (lowers pKa of active site Tyr) is an active-site residue.

The protein belongs to the short-chain dehydrogenases/reductases (SDR) family.

The protein localises to the endoplasmic reticulum membrane. The enzyme catalyses a very-long-chain (3R)-3-hydroxyacyl-CoA + NADP(+) = a very-long-chain 3-oxoacyl-CoA + NADPH + H(+). The protein operates within lipid metabolism; fatty acid biosynthesis. Its function is as follows. Component of the microsomal membrane bound fatty acid elongation system, which produces the 26-carbon very long-chain fatty acids (VLCFA) from palmitate. Catalyzes the reduction of the 3-ketoacyl-CoA intermediate that is formed in each cycle of fatty acid elongation. VLCFAs serve as precursors for ceramide and sphingolipids. This Aspergillus oryzae (strain ATCC 42149 / RIB 40) (Yellow koji mold) protein is Very-long-chain 3-oxoacyl-CoA reductase.